The sequence spans 569 residues: Glycylpeptide N-tetradecanoyltransferase (569 aa).

A compositionally biased stretch (basic and acidic residues) spans 1–18; the sequence is MPPTEESKPVDPAQEKQA. The tract at residues 1 to 82 is disordered; the sequence is MPPTEESKPV…STESSAEVGL (82 aa). A compositionally biased stretch (basic residues) spans 55-68; it reads TKKKNKKKSKKKNK. Tetradecanoyl-CoA is bound by residues 158 to 161, 291 to 293, and 299 to 303; these read YKFW, LCI, and GKRLA. Val-569 acts as the Proton acceptor; via carboxylate in catalysis.

Belongs to the NMT family. In terms of assembly, monomer.

It localises to the cytoplasm. It carries out the reaction N-terminal glycyl-[protein] + tetradecanoyl-CoA = N-tetradecanoylglycyl-[protein] + CoA + H(+). In terms of biological role, adds a myristoyl group to the N-terminal glycine residue of certain cellular proteins. This chain is Glycylpeptide N-tetradecanoyltransferase (gtt-1), found in Neurospora crassa (strain ATCC 24698 / 74-OR23-1A / CBS 708.71 / DSM 1257 / FGSC 987).